The primary structure comprises 987 residues: Pro-apoptotic serine protease NMA111 (987 aa).

Residues 1 to 29 are disordered; the sequence is MPDIPTKRRLSNGSVIDNTNKRQMQSSFV. Residues 11-28 are compositionally biased toward polar residues; that stretch reads SNGSVIDNTNKRQMQSSF. The tract at residues 69–262 is serine protease; sequence VKSVVSIQFT…LPVYRPLRAL (194 aa). Active-site charge relay system residues include His110, Asp141, and Ser224. 2 PDZ domains span residues 279-364 and 878-950; these read EWSL…VVIQ and PHHG…VSFD.

Belongs to the peptidase S1C family.

It localises to the nucleus. Functionally, nuclear serine protease which mediates apoptosis. In Debaryomyces hansenii (strain ATCC 36239 / CBS 767 / BCRC 21394 / JCM 1990 / NBRC 0083 / IGC 2968) (Yeast), this protein is Pro-apoptotic serine protease NMA111 (NMA111).